The sequence spans 478 residues: Zinc metalloproteinase/disintegrin (478 aa).

The first 20 residues, Met-1–Ser-20, serve as a signal peptide directing secretion. The propeptide occupies Lys-21 to Glu-194. A Pyrrolidone carboxylic acid modification is found at Gln-195. The region spanning Arg-201 to Pro-397 is the Peptidase M12B domain. The Ca(2+) site is built by Glu-204 and Asp-288. 3 cysteine pairs are disulfide-bonded: Cys-312–Cys-392, Cys-352–Cys-376, and Cys-354–Cys-359. His-337 contacts Zn(2+). Glu-338 is an active-site residue. Zn(2+) contacts are provided by His-341 and His-347. Ca(2+)-binding residues include Cys-392 and Asn-395. A propeptide spanning residues Leu-398–Leu-413 is cleaved from the precursor. In terms of domain architecture, Disintegrin spans Thr-405–Asp-478. 4 cysteine pairs are disulfide-bonded: Cys-420–Cys-443, Cys-434–Cys-440, Cys-439–Cys-464, and Cys-452–Cys-471. Residues Val-456–Asp-458 carry the Cell attachment site; atypical (VGD) motif.

This sequence belongs to the venom metalloproteinase (M12B) family. P-II subfamily. P-IIe sub-subfamily. Monomer (metalloproteinase). Heterodimer; disulfide-linked (disintegrin). Requires Zn(2+) as cofactor. In terms of tissue distribution, expressed by the venom gland.

Its subcellular location is the secreted. Fibrinolytic and caseinolytic activities are inhibited by Cd(2+), Cu(2+) and Co(2+) ions. Not inhibited by Mg(2+), Ca(2+) and Ba(2+). Also inhibited by EDTA, EGTA and 1,10-phenanthroline. Functionally, fibrinolytic and fibrinogenolytic metalloproteinase that hydrolyzes the Aalpha-chain and more slowly the Bbeta-chain of fibrin and fibrinogen. Its fibrinolytic activity is direct, without any plasminogen activation. Also hydrolyzes casein and B-chain of oxidized insulin. Inhibits ADP-induced and collagen-induced platelet aggregation. Shows low hemorrhagic activity. Cleaves the plasma proteinase inhibitors alpha(2)-macroglobulin (A2M) and pregnancy zone protein (PZP), and is inhibited by them. The metalloprotease has no strict P1-P1' specificity requirement. Hydrolysis at sites with a Pro residue at P1 is observed with bradykinin, substance P, PZP and alpha chain fibrinogen (FGA). In terms of biological role, poor inhibitor of platelet aggregation. The disintegrin inhibits the adhesion of the alpha-4/beta-1 (ITGA4/ITGB1) integrin to VCAM-1. Inhibition on alpha-2b/beta-3 (ITGA2B/ITGB3) is low. In Macrovipera lebetinus (Levantine viper), this protein is Zinc metalloproteinase/disintegrin.